The sequence spans 220 residues: Fructose-6-phosphate aldolase 2 (220 aa).

Residue Lys85 is the Schiff-base intermediate with substrate of the active site.

The protein belongs to the transaldolase family. Type 3A subfamily. In terms of assembly, homodecamer.

It is found in the cytoplasm. The enzyme catalyses beta-D-fructose 6-phosphate = dihydroxyacetone + D-glyceraldehyde 3-phosphate. Functionally, catalyzes the reversible formation of fructose 6-phosphate from dihydroxyacetone and D-glyceraldehyde 3-phosphate via an aldolization reaction. The polypeptide is Fructose-6-phosphate aldolase 2 (fsaB) (Escherichia coli O6:H1 (strain CFT073 / ATCC 700928 / UPEC)).